The primary structure comprises 585 residues: Arginine--tRNA ligase (585 aa).

Residues 131-141 carry the 'HIGH' region motif; sequence ANPTGPMHVGH.

This sequence belongs to the class-I aminoacyl-tRNA synthetase family. As to quaternary structure, monomer.

It localises to the cytoplasm. The enzyme catalyses tRNA(Arg) + L-arginine + ATP = L-arginyl-tRNA(Arg) + AMP + diphosphate. The sequence is that of Arginine--tRNA ligase from Brucella ovis (strain ATCC 25840 / 63/290 / NCTC 10512).